The sequence spans 1078 residues: Teashirt homolog 1-A (1078 aa).

Disordered regions lie at residues 1–110 (MPRR…NVSY), 140–197 (KSNE…SNSA), and 271–300 (GHYRDDNKDRDAERTKRWSKPRKRSLMEME). Positions 26–36 (IEEDNLEDDGL) are enriched in acidic residues. Polar residues predominate over residues 57–71 (PSYQNSPISSATNQD). Residues 143–197 (ENSSPTTNTNKSSMSEATGSTSDPDTPTTIPSSSCTNTSTSISVTTSNSTNSNSA) show a composition bias toward low complexity. 2 consecutive C2H2-type zinc fingers follow at residues 248-272 (FKCKDCSAAYDTLVELTVHMNETGH) and 309-333 (LKCMYCGHSFESLQDLSVHMIKTKH). The span at 271–286 (GHYRDDNKDRDAERTK) shows a compositional bias: basic and acidic residues. A disordered region spans residues 365 to 394 (DSPEQAGISPGASVSESAKDPKAANPYVTP). The C2H2-type 3 zinc finger occupies 418–442 (LKCMECGSSHDSLQQLTAHMMVTGH). Disordered stretches follow at residues 472-524 (LPPT…ENED) and 850-877 (RLTPKSSTPSTVSEKSDADGSSFEEAMD). A compositionally biased stretch (basic and acidic residues) spans 497 to 524 (HSEEKKDPEKEKVNNCEVEKRIKEENED). A compositionally biased stretch (polar residues) spans 853–862 (PKSSTPSTVS). Positions 885-955 (RKGRQSNWNP…NVKYQLRRTG (71 aa)) form a DNA-binding region, homeobox. 2 consecutive C2H2-type zinc fingers follow at residues 970–992 (FFCNDCASQFRTASTYIGHLETH) and 1038–1061 (FQCKLCNRTFASKHAVKLHLSKTH).

It belongs to the teashirt C2H2-type zinc-finger protein family.

It localises to the nucleus. Probable transcriptional regulator involved in developmental processes. May act as a transcriptional repressor (Potential). Involved in two major neuronal regionalization processes: primary anteroposterior (AP) axis patterning of the CNS and segmentation of the cranial neuronal crest (CNS) development. In Xenopus laevis (African clawed frog), this protein is Teashirt homolog 1-A (tshz1-a).